The primary structure comprises 302 residues: Sulfate adenylyltransferase subunit 2 (302 aa).

Belongs to the PAPS reductase family. CysD subfamily. In terms of assembly, heterodimer composed of CysD, the smaller subunit, and CysN.

It carries out the reaction sulfate + ATP + H(+) = adenosine 5'-phosphosulfate + diphosphate. It participates in sulfur metabolism; hydrogen sulfide biosynthesis; sulfite from sulfate: step 1/3. Its function is as follows. With CysN forms the ATP sulfurylase (ATPS) that catalyzes the adenylation of sulfate producing adenosine 5'-phosphosulfate (APS) and diphosphate, the first enzymatic step in sulfur assimilation pathway. APS synthesis involves the formation of a high-energy phosphoric-sulfuric acid anhydride bond driven by GTP hydrolysis by CysN coupled to ATP hydrolysis by CysD. The protein is Sulfate adenylyltransferase subunit 2 of Xanthomonas campestris pv. campestris (strain 8004).